We begin with the raw amino-acid sequence, 217 residues long: GTP cyclohydrolase 1 (217 aa).

Residues Cys-109, His-112, and Cys-180 each contribute to the Zn(2+) site.

This sequence belongs to the GTP cyclohydrolase I family. Toroid-shaped homodecamer, composed of two pentamers of five dimers.

The catalysed reaction is GTP + H2O = 7,8-dihydroneopterin 3'-triphosphate + formate + H(+). Its pathway is cofactor biosynthesis; 7,8-dihydroneopterin triphosphate biosynthesis; 7,8-dihydroneopterin triphosphate from GTP: step 1/1. This Aliivibrio fischeri (strain ATCC 700601 / ES114) (Vibrio fischeri) protein is GTP cyclohydrolase 1.